A 283-amino-acid polypeptide reads, in one-letter code: Probable cytochrome c oxidase subunit 3 (283 aa).

Helical transmembrane passes span 26 to 46 (PWPV…VSFM), 51 to 71 (FNIY…YSWW), 94 to 114 (IGMA…FASF), 179 to 199 (CVTA…MQAY), 217 to 237 (FYLA…FLII), and 261 to 281 (AWYW…VYIF).

This sequence belongs to the cytochrome c oxidase subunit 3 family.

The protein resides in the cell membrane. The catalysed reaction is 4 Fe(II)-[cytochrome c] + O2 + 8 H(+)(in) = 4 Fe(III)-[cytochrome c] + 2 H2O + 4 H(+)(out). The polypeptide is Probable cytochrome c oxidase subunit 3 (ctaE) (Rickettsia conorii (strain ATCC VR-613 / Malish 7)).